Reading from the N-terminus, the 114-residue chain is Eukaryotic translation initiation factor 6 (114 aa).

The protein belongs to the eIF-6 family. In terms of assembly, monomer. Associates with the 60S ribosomal subunit.

The protein resides in the cytoplasm. The protein localises to the nucleus. It localises to the nucleolus. Functionally, binds to the 60S ribosomal subunit and prevents its association with the 40S ribosomal subunit to form the 80S initiation complex in the cytoplasm. May also be involved in ribosome biogenesis. The sequence is that of Eukaryotic translation initiation factor 6 from Trypanosoma cruzi.